Consider the following 219-residue polypeptide: PKHD-type hydroxylase Plav_0037 (219 aa).

Residues 78–172 form the Fe2OG dioxygenase domain; it reads NFIRILLSRY…RRAAVGWIRS (95 aa). Fe cation-binding residues include His-96, Asp-98, and His-153. Position 163 (Arg-163) interacts with 2-oxoglutarate.

Fe(2+) is required as a cofactor. L-ascorbate serves as cofactor.

This is PKHD-type hydroxylase Plav_0037 from Parvibaculum lavamentivorans (strain DS-1 / DSM 13023 / NCIMB 13966).